A 791-amino-acid chain; its full sequence is 1-phosphatidylinositol 4,5-bisphosphate phosphodiesterase delta-4 (791 aa).

Positions L16–G124 constitute a PH domain. The substrate binding stretch occupies residues K26–A53. EF-hand domains are found at residues R134–E169, M170–R205, and E207–E237. Ca(2+) is bound by residues D147, N149, D151, R153, E158, D183, S185, S187, T189, and E194. The short motif at E213–D243 is the GBA element. One can recognise a PI-PLC X-box domain in the interval Q290–K435. The active site involves H305. Ca(2+)-binding residues include N306, E335, and D337. Residue H350 is part of the active site. Ca(2+) is bound at residue E384. Substrate-binding residues include K433, K435, S551, and R578. One can recognise a PI-PLC Y-box domain in the interval L522 to R638. In terms of domain architecture, C2 spans R638 to S765. I679, D681, N705, D734, Y735, and D736 together coordinate Ca(2+). A PDZ-binding motif is present at residues H760–L763.

Interacts with GRIP1. Interacts (via GBA motif) with guanine nucleotide-binding protein G(i) alpha subunit GNAI3 (inactive GDP-bound form); low-affinity interaction. The cofactor is Ca(2+).

It is found in the membrane. The protein resides in the nucleus. The protein localises to the cytoplasm. Its subcellular location is the endoplasmic reticulum. The catalysed reaction is a 1,2-diacyl-sn-glycero-3-phospho-(1D-myo-inositol-4,5-bisphosphate) + H2O = 1D-myo-inositol 1,4,5-trisphosphate + a 1,2-diacyl-sn-glycerol + H(+). It carries out the reaction a 1,2-diacyl-sn-glycero-3-phospho-(1D-myo-inositol) + H2O = 1D-myo-inositol 1-phosphate + a 1,2-diacyl-sn-glycerol + H(+). Hydrolyzes the phosphatidylinositol 4,5-bisphosphate (PIP2) to generate 2 second messenger molecules diacylglycerol (DAG) and inositol 1,4,5-trisphosphate (IP3). DAG mediates the activation of protein kinase C (PKC), while IP3 releases Ca(2+) from intracellular stores. Required for acrosome reaction in sperm during fertilization, probably by acting as an important enzyme for intracellular Ca(2+) mobilization in the zona pellucida-induced acrosome reaction. May play a role in cell growth. Modulates the liver regeneration in cooperation with nuclear PKC. Overexpression up-regulates the Erk signaling pathway and proliferation. The protein is 1-phosphatidylinositol 4,5-bisphosphate phosphodiesterase delta-4 (PLCD4) of Bos taurus (Bovine).